Reading from the N-terminus, the 161-residue chain is Nucleotide-binding protein PBPRA2024 (161 aa).

It belongs to the YajQ family.

Its function is as follows. Nucleotide-binding protein. This chain is Nucleotide-binding protein PBPRA2024, found in Photobacterium profundum (strain SS9).